The primary structure comprises 178 residues: UPF0302 protein BCAH187_A1683 (178 aa).

This sequence belongs to the UPF0302 family.

This chain is UPF0302 protein BCAH187_A1683, found in Bacillus cereus (strain AH187).